The chain runs to 371 residues: Solute carrier family 35 member F6 (371 aa).

Positions 1 to 18 are cleaved as a signal peptide; the sequence is MAWTKYQLFLAGLMLVTG. Helical transmembrane passes span 48–68 and 89–109; these read FLQAVGMFLGEFSCLAAFYLL and LLFLPPALCDMTGTSLMYVAL. The region spanning 104 to 160 is the EamA domain; it reads LMYVALNMTSASSFQMLRGAVIIFTGLFSVAFLGRRLVLSQWLGILATIAGLVVVGL. An N-linked (GlcNAc...) asparagine glycan is attached at Asn-110. A run of 7 helical transmembrane segments spans residues 117 to 137, 140 to 160, 176 to 196, 216 to 236, 261 to 281, 295 to 312, and 317 to 336; these read FQMLRGAVIIFTGLFSVAFLG, LVLSQWLGILATIAGLVVVGL, VITGDLLIIMAQIIVAIQMVL, GLFGFVILSLLLVPMYYIPAG, LIAVALLGNISSIAFFNFAGI, LDSLRTVVIWALSLALGW, and ALQILGFLILLIGTALYNGL. The tract at residues 352 to 371 is disordered; sequence EESEQERLLGGTRTPINDAS. Phosphothreonine is present on Thr-365.

Belongs to the SLC35F solute transporter family. In terms of assembly, interacts with SLC25A5. As to expression, expressed in pancreatic ductal adenocarcinoma (PDAC) (at protein level). Strongly expressed in prostate and thyroid. Weakly expressed in lung, heart, liver and kidney.

Its subcellular location is the mitochondrion. The protein resides in the lysosome membrane. Functionally, involved in the maintenance of mitochondrial membrane potential in pancreatic ductal adenocarcinoma (PDAC) cells. Promotes pancreatic ductal adenocarcinoma (PDAC) cell growth. May play a role as a nucleotide-sugar transporter. This chain is Solute carrier family 35 member F6 (SLC35F6), found in Homo sapiens (Human).